A 348-amino-acid chain; its full sequence is Fructose-1,6-bisphosphatase class 1 (348 aa).

Residues glutamate 92, aspartate 111, leucine 113, and aspartate 114 each coordinate Mg(2+). Substrate is bound by residues 114 to 117 (DGSS) and asparagine 204. Residue glutamate 276 participates in Mg(2+) binding.

This sequence belongs to the FBPase class 1 family. Homotetramer. It depends on Mg(2+) as a cofactor.

It localises to the cytoplasm. It catalyses the reaction beta-D-fructose 1,6-bisphosphate + H2O = beta-D-fructose 6-phosphate + phosphate. Its pathway is carbohydrate biosynthesis; gluconeogenesis. This chain is Fructose-1,6-bisphosphatase class 1, found in Methylorubrum populi (strain ATCC BAA-705 / NCIMB 13946 / BJ001) (Methylobacterium populi).